We begin with the raw amino-acid sequence, 159 residues long: Putative phosphatidylinositol-3-phosphatase (159 aa).

The first 16 residues, 1-16 (MKRPSFLPVLIGTGFG), serve as a signal peptide directing secretion. Transmembrane regions (helical) follow at residues 30-50 (LLAS…ALLW), 54-74 (ALVV…ESCW), 104-124 (WYVI…PLGV), and 134-154 (VGVM…IAVA).

It is found in the membrane. It catalyses the reaction a 1,2-diacyl-sn-glycero-3-phospho-(1D-myo-inositol-3-phosphate) + H2O = a 1,2-diacyl-sn-glycero-3-phospho-(1D-myo-inositol) + phosphate. Its function is as follows. May be responsible for the conversion of phosphatidylinositol phosphate diacylglycerol (PIP-DAG) to phosphatidylinositol diacylglycerol (PI-DAG), making it a key enzyme in the inositol glycerophospholipid biosynthesis pathway. This chain is Putative phosphatidylinositol-3-phosphatase, found in Bacteroides thetaiotaomicron (strain ATCC 29148 / DSM 2079 / JCM 5827 / CCUG 10774 / NCTC 10582 / VPI-5482 / E50).